Consider the following 430-residue polypeptide: Tyrosine--tRNA ligase (430 aa).

Y32 is a binding site for L-tyrosine. The 'HIGH' region motif lies at 37-46 (PTADSLHIGH). Y172 and Q176 together coordinate L-tyrosine. The short motif at 232–236 (KFGKT) is the 'KMSKS' region element. K235 is a binding site for ATP. Residues 362 to 430 (ISLVDLLADA…KKSYYLIIVE (69 aa)) form the S4 RNA-binding domain.

The protein belongs to the class-I aminoacyl-tRNA synthetase family. TyrS type 1 subfamily. As to quaternary structure, homodimer.

The protein resides in the cytoplasm. It carries out the reaction tRNA(Tyr) + L-tyrosine + ATP = L-tyrosyl-tRNA(Tyr) + AMP + diphosphate + H(+). Functionally, catalyzes the attachment of tyrosine to tRNA(Tyr) in a two-step reaction: tyrosine is first activated by ATP to form Tyr-AMP and then transferred to the acceptor end of tRNA(Tyr). This is Tyrosine--tRNA ligase from Porphyromonas gingivalis (strain ATCC 33277 / DSM 20709 / CIP 103683 / JCM 12257 / NCTC 11834 / 2561).